The primary structure comprises 231 residues: Ureidoacrylate amidohydrolase RutB (231 aa).

The active-site Proton acceptor is the aspartate 25. Lysine 134 is a catalytic residue. The active-site Nucleophile is cysteine 167.

This sequence belongs to the isochorismatase family. RutB subfamily.

It catalyses the reaction (Z)-3-ureidoacrylate + H2O + H(+) = (Z)-3-aminoacrylate + NH4(+) + CO2. The catalysed reaction is (Z)-3-ureidoacrylate + H2O = (Z)-3-aminoacrylate + carbamate + H(+). The enzyme catalyses (Z)-2-methylureidoacrylate + H2O + H(+) = (Z)-2-methylaminoacrylate + NH4(+) + CO2. Functionally, hydrolyzes ureidoacrylate to form aminoacrylate and carbamate. The carbamate hydrolyzes spontaneously, thereby releasing one of the nitrogen atoms of the pyrimidine ring as ammonia and one of its carbon atoms as CO2. The sequence is that of Ureidoacrylate amidohydrolase RutB from Escherichia coli (strain SMS-3-5 / SECEC).